Here is a 727-residue protein sequence, read N- to C-terminus: Glucans biosynthesis glucosyltransferase H (727 aa).

The segment at 18-38 is disordered; the sequence is SAMPNERPGAMEPQNLSKMPE. 7 helical membrane-spanning segments follow: residues 58 to 78, 97 to 117, 278 to 298, 408 to 428, 460 to 480, 496 to 516, and 572 to 592; these read FLVV…MGAV, VNFC…LILL, LQQF…GWWV, IMAY…LMLA, LFYI…LLLL, IFSV…MMFI, and LLAW…ISAW.

Belongs to the glycosyltransferase 2 family. OpgH subfamily.

It is found in the cell inner membrane. Its pathway is glycan metabolism; osmoregulated periplasmic glucan (OPG) biosynthesis. Functionally, involved in the biosynthesis of osmoregulated periplasmic glucans (OPGs). The protein is Glucans biosynthesis glucosyltransferase H of Shewanella baltica (strain OS223).